Here is a 287-residue protein sequence, read N- to C-terminus: Nucleotide-binding protein VV0445 (287 aa).

8 to 15 (GHSGAGKS) is a binding site for ATP. 56–59 (DVRN) lines the GTP pocket.

This sequence belongs to the RapZ-like family.

Functionally, displays ATPase and GTPase activities. The protein is Nucleotide-binding protein VV0445 of Vibrio vulnificus (strain YJ016).